A 396-amino-acid chain; its full sequence is Maltose/maltodextrin-binding periplasmic protein (396 aa).

A signal peptide spans 1–26 (MKIKTGVGILALSALTTMMISAPALA).

Belongs to the bacterial solute-binding protein 1 family. In terms of assembly, the complex is composed of two ATP-binding proteins (MalK), two transmembrane proteins (MalG and MalF) and a solute-binding protein (MalE).

Its subcellular location is the periplasm. Part of the ABC transporter complex MalEFGK involved in maltose/maltodextrin import. Binds maltose and higher maltodextrins. The polypeptide is Maltose/maltodextrin-binding periplasmic protein (malE) (Salmonella typhimurium (strain LT2 / SGSC1412 / ATCC 700720)).